A 265-amino-acid polypeptide reads, in one-letter code: 4-hydroxy-tetrahydrodipicolinate reductase (265 aa).

Residues 7–12 (GASGRM) and D33 contribute to the NAD(+) site. Residue R34 coordinates NADP(+). Residues 96–98 (GTT) and 120–123 (AANM) each bind NAD(+). The Proton donor/acceptor role is filled by H153. H154 is a (S)-2,3,4,5-tetrahydrodipicolinate binding site. Residue K157 is the Proton donor of the active site. 163 to 164 (GT) contributes to the (S)-2,3,4,5-tetrahydrodipicolinate binding site.

Belongs to the DapB family.

It is found in the cytoplasm. It catalyses the reaction (S)-2,3,4,5-tetrahydrodipicolinate + NAD(+) + H2O = (2S,4S)-4-hydroxy-2,3,4,5-tetrahydrodipicolinate + NADH + H(+). The enzyme catalyses (S)-2,3,4,5-tetrahydrodipicolinate + NADP(+) + H2O = (2S,4S)-4-hydroxy-2,3,4,5-tetrahydrodipicolinate + NADPH + H(+). Its pathway is amino-acid biosynthesis; L-lysine biosynthesis via DAP pathway; (S)-tetrahydrodipicolinate from L-aspartate: step 4/4. Functionally, catalyzes the conversion of 4-hydroxy-tetrahydrodipicolinate (HTPA) to tetrahydrodipicolinate. The polypeptide is 4-hydroxy-tetrahydrodipicolinate reductase (Burkholderia lata (strain ATCC 17760 / DSM 23089 / LMG 22485 / NCIMB 9086 / R18194 / 383)).